The sequence spans 347 residues: MDYKTSGVDIEAGREFVSEIKQAVEGTHTSNVIEGIGGFGGLFRIPIDSFKKPVLVSGTDGVGTKLELAQSKNFHFEVGIDLVAMCINDIITSGAKPLFFLDYIATGKLDKKQLLRVVQGISHGCGENNCSLLGGETAEMPGFYSKNKYDLAGFCVGIVDEDKLINGKKVSENDLIIALKSNGVHSNGFSLVRKIIQNNNQIEKEFEKVSHLSFYDELLKPTKIYNNVIGQILSEDIEIKAMSHITGGGIPENLPRCIPSDFIPYINTNSWEIPILFEFLKKIGSIPEKDFWNTFNLGVGFCLIIDKQFKDRIYNICKDHDIDSWEIGKIVRKDNATISKFLPEILT.

This sequence belongs to the AIR synthase family.

It is found in the cytoplasm. It carries out the reaction 2-formamido-N(1)-(5-O-phospho-beta-D-ribosyl)acetamidine + ATP = 5-amino-1-(5-phospho-beta-D-ribosyl)imidazole + ADP + phosphate + H(+). Its pathway is purine metabolism; IMP biosynthesis via de novo pathway; 5-amino-1-(5-phospho-D-ribosyl)imidazole from N(2)-formyl-N(1)-(5-phospho-D-ribosyl)glycinamide: step 2/2. This Prochlorococcus marinus (strain MIT 9215) protein is Phosphoribosylformylglycinamidine cyclo-ligase.